The primary structure comprises 307 residues: Ornithine carbamoyltransferase (307 aa).

Carbamoyl phosphate is bound by residues 56 to 59 (STRT), Q83, R107, and 134 to 137 (HPCQ). L-ornithine-binding positions include N165, D223, and 227 to 228 (SM). Residues 263–264 (CL) and R291 contribute to the carbamoyl phosphate site.

It belongs to the aspartate/ornithine carbamoyltransferase superfamily. OTCase family.

The protein localises to the cytoplasm. The catalysed reaction is carbamoyl phosphate + L-ornithine = L-citrulline + phosphate + H(+). The protein operates within amino-acid biosynthesis; L-arginine biosynthesis; L-arginine from L-ornithine and carbamoyl phosphate: step 1/3. Its function is as follows. Reversibly catalyzes the transfer of the carbamoyl group from carbamoyl phosphate (CP) to the N(epsilon) atom of ornithine (ORN) to produce L-citrulline. This Cupriavidus pinatubonensis (strain JMP 134 / LMG 1197) (Cupriavidus necator (strain JMP 134)) protein is Ornithine carbamoyltransferase.